We begin with the raw amino-acid sequence, 1222 residues long: PAN2-PAN3 deadenylation complex catalytic subunit PAN2 (1222 aa).

2 WD repeats span residues Pro104–Gln143 and Ala276–Glu315. The interval Ile316–Glu451 is linker. The region spanning Asp452 to Ser821 is the USP domain. The 157-residue stretch at Ala871–Glu1027 folds into the Exonuclease domain. Positions 873, 875, and 982 each coordinate a divalent metal cation. A disordered region spans residues Thr1035 to Asp1067. Residues Thr1050–Thr1061 are compositionally biased toward low complexity. Asp1071 serves as a coordination point for a divalent metal cation. Disordered stretches follow at residues Pro1110–Arg1152 and Ala1167–Arg1222. Residues Pro1119–Asn1133 are compositionally biased toward low complexity. Polar residues predominate over residues Gly1134 to Ile1144. The segment covering Asn1180–Pro1191 has biased composition (low complexity). Positions Ser1207 to Phe1216 are enriched in gly residues.

It belongs to the peptidase C19 family. PAN2 subfamily. Forms a heterotrimer with an asymmetric homodimer of the regulatory subunit PAN3 to form the poly(A)-nuclease (PAN) deadenylation complex. Requires a divalent metal cation as cofactor.

Its subcellular location is the cytoplasm. The catalysed reaction is Exonucleolytic cleavage of poly(A) to 5'-AMP.. Positively regulated by the regulatory subunit PAN3. Its function is as follows. Catalytic subunit of the poly(A)-nuclease (PAN) deadenylation complex, one of two cytoplasmic mRNA deadenylases involved in mRNA turnover. PAN specifically shortens poly(A) tails of RNA and the activity is stimulated by poly(A)-binding protein PAB1. PAN deadenylation is followed by rapid degradation of the shortened mRNA tails by the CCR4-NOT complex. Deadenylated mRNAs are then degraded by two alternative mechanisms, namely exosome-mediated 3'-5' exonucleolytic degradation, or deadenylation-dependent mRNA decaping and subsequent 5'-3' exonucleolytic degradation by XRN1. May also be involved in post-transcriptional maturation of mRNA poly(A) tails. This is PAN2-PAN3 deadenylation complex catalytic subunit PAN2 from Coccidioides immitis (strain RS) (Valley fever fungus).